Reading from the N-terminus, the 319-residue chain is Na(+)-translocating NADH-quinone reductase subunit C (319 aa).

A helical membrane pass occupies residues 14–34; sequence WYVILFIFALSLFSSVFLSTV. FMN phosphoryl threonine is present on Thr283.

Belongs to the NqrC family. In terms of assembly, composed of six subunits; NqrA, NqrB, NqrC, NqrD, NqrE and NqrF. It depends on FMN as a cofactor.

The protein localises to the cell inner membrane. It catalyses the reaction a ubiquinone + n Na(+)(in) + NADH + H(+) = a ubiquinol + n Na(+)(out) + NAD(+). In terms of biological role, NQR complex catalyzes the reduction of ubiquinone-1 to ubiquinol by two successive reactions, coupled with the transport of Na(+) ions from the cytoplasm to the periplasm. NqrA to NqrE are probably involved in the second step, the conversion of ubisemiquinone to ubiquinol. The sequence is that of Na(+)-translocating NADH-quinone reductase subunit C from Chlamydia caviae (strain ATCC VR-813 / DSM 19441 / 03DC25 / GPIC) (Chlamydophila caviae).